The following is a 433-amino-acid chain: Probable mannan endo-1,4-beta-mannosidase F (433 aa).

Residues 1-19 (MKRQALTLIPLLGAAAAQS) form the signal peptide. The CBM1 domain maps to 20–53 (GPYGQCGGNDWSGATTCVSGYVCVYQNEWYSQCV). The interval 56-82 (TATSSSTTLTTTTSATTRTTTTTTSTT) is thr-rich linker. A catalytic region spans residues 83-433 (SVPSSTNFPS…TEHMERIAAR (351 aa)). The N-linked (GlcNAc...) asparagine glycan is linked to Asn-97. Residues Trp-142 and Asn-255 each coordinate substrate. Catalysis depends on Glu-256, which acts as the Proton donor. A substrate-binding site is contributed by Tyr-331. Catalysis depends on Glu-364, which acts as the Nucleophile. A substrate-binding site is contributed by Trp-394.

It belongs to the glycosyl hydrolase 5 (cellulase A) family.

The protein localises to the secreted. The catalysed reaction is Random hydrolysis of (1-&gt;4)-beta-D-mannosidic linkages in mannans, galactomannans and glucomannans.. Functionally, endo-1,4-mannanase, a crucial enzyme for depolymerization of seed galactomannans and wood galactoglucomannans. This Emericella nidulans (strain FGSC A4 / ATCC 38163 / CBS 112.46 / NRRL 194 / M139) (Aspergillus nidulans) protein is Probable mannan endo-1,4-beta-mannosidase F (manF).